The chain runs to 161 residues: Regulator of ribonuclease activity A (161 aa).

It belongs to the RraA family. Homotrimer. Binds to both RNA-binding sites in the C-terminal region of Rne and to RhlB.

It is found in the cytoplasm. Globally modulates RNA abundance by binding to RNase E (Rne) and regulating its endonucleolytic activity. Can modulate Rne action in a substrate-dependent manner by altering the composition of the degradosome. Modulates RNA-binding and helicase activities of the degradosome. This Yersinia pseudotuberculosis serotype O:1b (strain IP 31758) protein is Regulator of ribonuclease activity A.